A 39-amino-acid polypeptide reads, in one-letter code: TTKNYGNGVCNSVNWCQCGNVWASCNLATGCAAWLCKLA.

It is found in the secreted. Functionally, bacteriocin active against the Gram-negative bacteria C.jejuni, Y.enterocolitica and Y.pseudotuberculosis, and the Gram-positive bacteria S.aureus, S.epidermidis, L.monocytogenes and Listeria spp. When added to the drinking water of chickens, causes a decrease in the levels of C.jejuni and S.enteritidis in the ceca, and in the levels of S.enteritidis in the liver and spleen. The sequence is that of Bacteriocin E50-52 from Enterococcus faecium (Streptococcus faecium).